The sequence spans 427 residues: Peptidase B (427 aa).

K195 and D200 together coordinate Mn(2+). K207 is an active-site residue. Mn(2+) contacts are provided by D218, D277, and E279. The active site involves R281.

The protein belongs to the peptidase M17 family. In terms of assembly, homohexamer. Mn(2+) serves as cofactor.

The protein localises to the cytoplasm. The enzyme catalyses Release of an N-terminal amino acid, Xaa, from a peptide or arylamide. Xaa is preferably Glu or Asp but may be other amino acids, including Leu, Met, His, Cys and Gln.. Functionally, probably plays an important role in intracellular peptide degradation. This chain is Peptidase B, found in Escherichia coli O127:H6 (strain E2348/69 / EPEC).